The following is a 247-amino-acid chain: Adenosylcobinamide-GDP ribazoletransferase (247 aa).

5 consecutive transmembrane segments (helical) span residues 34–54 (IITFPLIGLLLGAISGLVFMV), 59–79 (CGVPLAALFSVLVLALMTGGF), 113–133 (GGLALIFVVLAKILVLSELAL), 138–158 (ILASLAAACAVSRGIAALLMY), and 194–214 (VLLPGMHGVAAMVVTMVAIFI).

The protein belongs to the CobS family. It depends on Mg(2+) as a cofactor.

It is found in the cell inner membrane. It catalyses the reaction alpha-ribazole + adenosylcob(III)inamide-GDP = adenosylcob(III)alamin + GMP + H(+). The catalysed reaction is alpha-ribazole 5'-phosphate + adenosylcob(III)inamide-GDP = adenosylcob(III)alamin 5'-phosphate + GMP + H(+). Its pathway is cofactor biosynthesis; adenosylcobalamin biosynthesis; adenosylcobalamin from cob(II)yrinate a,c-diamide: step 7/7. Functionally, joins adenosylcobinamide-GDP and alpha-ribazole to generate adenosylcobalamin (Ado-cobalamin). Also synthesizes adenosylcobalamin 5'-phosphate from adenosylcobinamide-GDP and alpha-ribazole 5'-phosphate. The polypeptide is Adenosylcobinamide-GDP ribazoletransferase (Shigella dysenteriae serotype 1 (strain Sd197)).